The following is a 411-amino-acid chain: Diels-Alderase ffsF (411 aa).

A signal peptide spans 1–17 (MTQIKLLLLSLAITAQS).

It belongs to the Diels-Alderase family.

It functions in the pathway mycotoxin biosynthesis. Diels-Alderase; part of the gene cluster that mediates the biosynthesis of the cytotoxic leucine-containing cytochalasans, including aspochalasin C, aspochalasin E, TMC-169, flavichalasine F, aspergillin PZ, aspochalasin M and flavichalasine G. The first step in the pathway is catalyzed by the hybrid PKS-NRPS ffsA that utilizes 8 units of malonyl-CoA to iteratively assemble the octaketide chain before addition of L-leucine by the C-terminal NRPS modules. Because ffsA lacks a designated enoylreductase (ER) domain, the required activity is provided the enoyl reductase fssC. The methyltransferase (MT) domain of ffsA catalyzes the alpha-methylation at C10 and C14 using S-adenosyl-L-methionine as the methyl-donating cosubstrate. Reduction by the hydrolyase ffsE, followed by dehydration and intra-molecular Diels-Alder cyclization by the Diels-Alderase ffsF then yield the required isoindolone-fused macrocycle. A number of oxidative steps catalyzed by the tailoring cytochrome P450 monooxygenase ffsD, the FAD-linked oxidoreductase ffsJ and the short-chain dehydrogenase/reductase ffsI, are further required to afford the final products. This is Diels-Alderase ffsF from Aspergillus flavipes.